A 98-amino-acid polypeptide reads, in one-letter code: NADH-ubiquinone oxidoreductase chain 4L (98 aa).

3 consecutive transmembrane segments (helical) span residues 1–21, 29–49, and 58–78; these read MPII…GMLI, SLLC…LMAL, and IVPI…LALL.

It belongs to the complex I subunit 4L family. As to quaternary structure, core subunit of respiratory chain NADH dehydrogenase (Complex I) which is composed of 45 different subunits.

It localises to the mitochondrion inner membrane. The enzyme catalyses a ubiquinone + NADH + 5 H(+)(in) = a ubiquinol + NAD(+) + 4 H(+)(out). Its function is as follows. Core subunit of the mitochondrial membrane respiratory chain NADH dehydrogenase (Complex I) which catalyzes electron transfer from NADH through the respiratory chain, using ubiquinone as an electron acceptor. Part of the enzyme membrane arm which is embedded in the lipid bilayer and involved in proton translocation. The chain is NADH-ubiquinone oxidoreductase chain 4L (MT-ND4L) from Nasalis larvatus (Proboscis monkey).